A 364-amino-acid chain; its full sequence is Ribosomal RNA large subunit methyltransferase M (364 aa).

Residues S187, 220-223 (CPGG), D239, D259, and D276 each bind S-adenosyl-L-methionine. The active-site Proton acceptor is the K305.

It belongs to the class I-like SAM-binding methyltransferase superfamily. RNA methyltransferase RlmE family. RlmM subfamily. As to quaternary structure, monomer.

It localises to the cytoplasm. It catalyses the reaction cytidine(2498) in 23S rRNA + S-adenosyl-L-methionine = 2'-O-methylcytidine(2498) in 23S rRNA + S-adenosyl-L-homocysteine + H(+). Its function is as follows. Catalyzes the 2'-O-methylation at nucleotide C2498 in 23S rRNA. The protein is Ribosomal RNA large subunit methyltransferase M of Aeromonas salmonicida (strain A449).